The sequence spans 410 residues: Subtilisin-like protease CPC735_003880 (410 aa).

Positions 1-17 are cleaved as a signal peptide; that stretch reads MKLLKSSLLLLLPFVTA. Positions 18-118 are excised as a propeptide; sequence NPIPSEDKDI…VTPDRKVYLA (101 aa). Positions 31-118 constitute an Inhibitor I9 domain; it reads RYIVTLKDGI…VTPDRKVYLA (88 aa). Residues 127 to 410 form the Peptidase S8 domain; it reads GYNLGHMSSK…IQEMNETVIA (284 aa). D159 serves as the catalytic Charge relay system. A glycan (N-linked (GlcNAc...) asparagine) is linked at N182. H191 functions as the Charge relay system in the catalytic mechanism. Residues N238, N251, and N338 are each glycosylated (N-linked (GlcNAc...) asparagine). S347 functions as the Charge relay system in the catalytic mechanism. N405 carries N-linked (GlcNAc...) asparagine glycosylation.

This sequence belongs to the peptidase S8 family.

It localises to the secreted. Its function is as follows. Secreted subtilisin-like serine protease with keratinolytic activity that contributes to pathogenicity. The polypeptide is Subtilisin-like protease CPC735_003880 (Coccidioides posadasii (strain C735) (Valley fever fungus)).